The sequence spans 346 residues: DNA-directed RNA polymerases I and III subunit RPAC1 (346 aa).

An N-acetylalanine modification is found at Ala2.

Belongs to the archaeal Rpo3/eukaryotic RPB3 RNA polymerase subunit family. In terms of assembly, component of the RNA polymerase I and RNA polymerase III complexes consisting of at least 13 and 17 subunits, respectively. Pol I complex consists of a ten-subunit catalytic core composed of POLR1A/RPA1, POLR1B/RPA2, POLR1C/RPAC1, POLR1D/RPAC2, POLR1H/RPA12, POLR2E/RPABC1, POLR2F/RPABC2, POLR2H/RPABC3, POLR2K/RPABC4 and POLR2L/RPABC5; a mobile stalk subunit POLR1F/RPA43 protruding from the core and additional subunits homologous to general transcription factors POLR1E/RPA49 and POLR1G/RPA34. Part of Pol I pre-initiation complex (PIC), in which Pol I core assembles with RRN3 and promoter-bound UTBF and SL1/TIF-IB complex. Pol III complex consists of a ten-subunit catalytic core composed of POLR3A/RPC1, POLR3B/RPC2, POLR1C/RPAC1, POLR1D/RPAC2, POLR3K/RPC10, POLR2E/RPABC1, POLR2F/RPABC2, POLR2H/RPABC3, POLR2K/RPABC4 and POLR2L/RPABC5; a mobile stalk composed of two subunits POLR3H/RPC8 and CRCP/RPC9, protruding from the core and functioning primarily in transcription initiation; and additional subunits homologous to general transcription factors of the RNA polymerase II machinery, POLR3C/RPC3-POLR3F/RPC6-POLR3G/RPC7 heterotrimer required for transcription initiation and POLR3D/RPC4-POLR3E/RPC5 heterodimer involved in both transcription initiation and termination.

It is found in the nucleus. The protein localises to the cytoplasm. Its subcellular location is the cytosol. DNA-dependent RNA polymerase catalyzes the transcription of DNA into RNA using the four ribonucleoside triphosphates as substrates. Common component of RNA polymerases I and III which synthesize ribosomal RNA precursors and short non-coding RNAs including 5S rRNA, snRNAs, tRNAs and miRNAs, respectively. POLR1C/RPAC1 is part of the polymerase core and may function as a clamp element that moves to open and close the cleft. The polypeptide is DNA-directed RNA polymerases I and III subunit RPAC1 (Mus musculus (Mouse)).